A 336-amino-acid chain; its full sequence is Probable RNA methyltransferase Anae109_4379 (336 aa).

E86 functions as the Proton acceptor in the catalytic mechanism. The Radical SAM core domain occupies 93–322 (FDTHHTVCLS…PIVRRYSGGQ (230 aa)). Residues C100 and C328 are joined by a disulfide bond. Residues C107, C111, and C114 each contribute to the [4Fe-4S] cluster site. Residues 154 to 155 (GE), S186, and 209 to 211 (SLN) contribute to the S-adenosyl-L-methionine site. The active-site S-methylcysteine intermediate is C328.

It belongs to the radical SAM superfamily. RlmN family. The cofactor is [4Fe-4S] cluster.

The protein resides in the cytoplasm. The polypeptide is Probable RNA methyltransferase Anae109_4379 (Anaeromyxobacter sp. (strain Fw109-5)).